The primary structure comprises 490 residues: UDP-N-acetylmuramate--L-alanine ligase (490 aa).

An ATP-binding site is contributed by 126–132 (GTHGKTT).

Belongs to the MurCDEF family.

It localises to the cytoplasm. It carries out the reaction UDP-N-acetyl-alpha-D-muramate + L-alanine + ATP = UDP-N-acetyl-alpha-D-muramoyl-L-alanine + ADP + phosphate + H(+). It participates in cell wall biogenesis; peptidoglycan biosynthesis. Functionally, cell wall formation. The polypeptide is UDP-N-acetylmuramate--L-alanine ligase (Baumannia cicadellinicola subsp. Homalodisca coagulata).